The following is a 237-amino-acid chain: Sugar fermentation stimulation protein homolog (237 aa).

The protein belongs to the SfsA family.

This Synechocystis sp. (strain ATCC 27184 / PCC 6803 / Kazusa) protein is Sugar fermentation stimulation protein homolog.